Consider the following 269-residue polypeptide: Senescence-associated protein 13 (269 aa).

An NADP(+)-binding site is contributed by 21 to 45 (LVTGGSKGIGEAVVEELAMLGAKVH). Serine 154 contacts substrate. Tyrosine 167 (proton acceptor) is an active-site residue.

It belongs to the short-chain dehydrogenases/reductases (SDR) family. SDR65C subfamily.

Functionally, unspecific reductase providing both diastereomeric alcohols from the prochiral ketones. Active on cyclic monoterpenes and small flexible lipophilic carbonyls. No activity with tropinone, nitrogen-containing tropinone analogs, tropine or pseudotropine as substrate. This is Senescence-associated protein 13 from Arabidopsis thaliana (Mouse-ear cress).